The chain runs to 258 residues: Acetylglutamate kinase (258 aa).

Substrate contacts are provided by residues Gly41–Gly42, Arg63, and Asn156.

Belongs to the acetylglutamate kinase family. ArgB subfamily.

It is found in the cytoplasm. It carries out the reaction N-acetyl-L-glutamate + ATP = N-acetyl-L-glutamyl 5-phosphate + ADP. Its pathway is amino-acid biosynthesis; L-arginine biosynthesis; N(2)-acetyl-L-ornithine from L-glutamate: step 2/4. Its function is as follows. Catalyzes the ATP-dependent phosphorylation of N-acetyl-L-glutamate. This chain is Acetylglutamate kinase, found in Bacillus velezensis (strain DSM 23117 / BGSC 10A6 / LMG 26770 / FZB42) (Bacillus amyloliquefaciens subsp. plantarum).